The primary structure comprises 482 residues: Glutamyl-tRNA(Gln) amidotransferase subunit A (482 aa).

Active-site charge relay system residues include lysine 74 and serine 149. Serine 173 serves as the catalytic Acyl-ester intermediate.

It belongs to the amidase family. GatA subfamily. As to quaternary structure, heterotrimer of A, B and C subunits.

It catalyses the reaction L-glutamyl-tRNA(Gln) + L-glutamine + ATP + H2O = L-glutaminyl-tRNA(Gln) + L-glutamate + ADP + phosphate + H(+). Functionally, allows the formation of correctly charged Gln-tRNA(Gln) through the transamidation of misacylated Glu-tRNA(Gln) in organisms which lack glutaminyl-tRNA synthetase. The reaction takes place in the presence of glutamine and ATP through an activated gamma-phospho-Glu-tRNA(Gln). The polypeptide is Glutamyl-tRNA(Gln) amidotransferase subunit A (Prochlorococcus marinus (strain MIT 9215)).